The following is a 360-amino-acid chain: Peptide chain release factor 1 (360 aa).

Q235 bears the N5-methylglutamine mark. The segment at 285–311 (KRQQAQASERRNLLGSGDRSDRHRTYN) is disordered. Residues 292-308 (SERRNLLGSGDRSDRHR) show a composition bias toward basic and acidic residues.

It belongs to the prokaryotic/mitochondrial release factor family. Methylated by PrmC. Methylation increases the termination efficiency of RF1.

The protein localises to the cytoplasm. In terms of biological role, peptide chain release factor 1 directs the termination of translation in response to the peptide chain termination codons UAG and UAA. This Hamiltonella defensa subsp. Acyrthosiphon pisum (strain 5AT) protein is Peptide chain release factor 1.